The chain runs to 200 residues: NADH-quinone oxidoreductase subunit B (200 aa).

[4Fe-4S] cluster-binding residues include C78, C79, C144, and C174.

Belongs to the complex I 20 kDa subunit family. In terms of assembly, NDH-1 is composed of 14 different subunits. Subunits NuoB, C, D, E, F, and G constitute the peripheral sector of the complex. The cofactor is [4Fe-4S] cluster.

It is found in the cell membrane. The enzyme catalyses a quinone + NADH + 5 H(+)(in) = a quinol + NAD(+) + 4 H(+)(out). NDH-1 shuttles electrons from NADH, via FMN and iron-sulfur (Fe-S) centers, to quinones in the respiratory chain. The immediate electron acceptor for the enzyme in this species is believed to be ubiquinone. Couples the redox reaction to proton translocation (for every two electrons transferred, four hydrogen ions are translocated across the cytoplasmic membrane), and thus conserves the redox energy in a proton gradient. This Dehalococcoides mccartyi (strain CBDB1) protein is NADH-quinone oxidoreductase subunit B.